The sequence spans 406 residues: Mitochondrial ribosome-associated GTPase 2 (406 aa).

A localized in the mitochondria region spans residues 15-406; the sequence is FQGVGHWALS…LGQGRQPLRW (392 aa). The tract at residues 30 to 406 is not localized in the mitochondria; the sequence is KPSRLLPQRA…LGQGRQPLRW (377 aa). Residues 70-224 enclose the Obg domain; the sequence is RYFVDYRRVL…RVLHLELKTV (155 aa). Residues 225-390 enclose the OBG-type G domain; that stretch reads AHAGMVGFPN…LLLHLKVLYD (166 aa). GTP contacts are provided by residues 231 to 238, 256 to 260, 278 to 281, 345 to 348, and 371 to 373; these read GFPNAGKS, FTTLK, DIPG, NKID, and SAL. Mg(2+)-binding residues include serine 238 and threonine 258.

Belongs to the TRAFAC class OBG-HflX-like GTPase superfamily. OBG GTPase family. As to quaternary structure, associates with the mitochondrial ribosome large subunit; the association occurs in a GTP-dependent manner. The cofactor is Mg(2+).

It localises to the mitochondrion. Its subcellular location is the mitochondrion inner membrane. Its function is as follows. Plays a role in the regulation of the mitochondrial ribosome assembly and of translational activity. Displays GTPase activity. Involved in the ribosome maturation process. The polypeptide is Mitochondrial ribosome-associated GTPase 2 (MTG2) (Homo sapiens (Human)).